A 359-amino-acid chain; its full sequence is F-box protein At1g10895 (359 aa).

The F-box domain occupies T2–K48.

In Arabidopsis thaliana (Mouse-ear cress), this protein is F-box protein At1g10895.